The primary structure comprises 391 residues: GTPase Obg (391 aa).

The Obg domain occupies 1-159 (MKFVDEAVVK…REIRLELLLL (159 aa)). One can recognise an OBG-type G domain in the interval 160 to 333 (ADVGMLGLPN…LCYKLADFME (174 aa)). GTP-binding positions include 166 to 173 (GLPNAGKS), 191 to 195 (FTTLI), 213 to 216 (DIPG), 283 to 286 (NKTD), and 314 to 316 (SAI). Residues Ser173 and Thr193 each coordinate Mg(2+). Acidic residues predominate over residues 367–383 (TEEDDDDWDDCDDEDDD). A disordered region spans residues 367 to 391 (TEEDDDDWDDCDDEDDDGHVVYVRD).

This sequence belongs to the TRAFAC class OBG-HflX-like GTPase superfamily. OBG GTPase family. In terms of assembly, monomer. Mg(2+) serves as cofactor.

It is found in the cytoplasm. Functionally, an essential GTPase which binds GTP, GDP and possibly (p)ppGpp with moderate affinity, with high nucleotide exchange rates and a fairly low GTP hydrolysis rate. Plays a role in control of the cell cycle, stress response, ribosome biogenesis and in those bacteria that undergo differentiation, in morphogenesis control. The polypeptide is GTPase Obg (Vibrio campbellii (strain ATCC BAA-1116)).